Here is a 211-residue protein sequence, read N- to C-terminus: MTRVALTSAVNLAKKLHDAGIRNQAVLKAISHTPREMFLDNALAHKAYENTALPIGQGQTISQPYIVARMTELLLHKMPQRVLEVGTGSGYQAAILAQLVPQLCTIERIKGLQIQARQRLKRLDLHNVSFKYGDGWLGWANRSPFDAIMVTAAASTIPEALLSQLAEGGVLVLPVGEDTQQLMRITRTGERFSSETIETVKFVPLINGELA.

The active site involves serine 62.

The protein belongs to the methyltransferase superfamily. L-isoaspartyl/D-aspartyl protein methyltransferase family.

The protein resides in the cytoplasm. It catalyses the reaction [protein]-L-isoaspartate + S-adenosyl-L-methionine = [protein]-L-isoaspartate alpha-methyl ester + S-adenosyl-L-homocysteine. Functionally, catalyzes the methyl esterification of L-isoaspartyl residues in peptides and proteins that result from spontaneous decomposition of normal L-aspartyl and L-asparaginyl residues. It plays a role in the repair and/or degradation of damaged proteins. The protein is Protein-L-isoaspartate O-methyltransferase of Shewanella baltica (strain OS195).